Here is a 103-residue protein sequence, read N- to C-terminus: Cystatin-A1 (103 aa).

The short motif at 51–55 (QVVAG) is the Secondary area of contact element.

Belongs to the cystatin family.

The protein resides in the cytoplasm. In terms of biological role, this is an intracellular thiol proteinase inhibitor. The protein is Cystatin-A1 of Sus scrofa (Pig).